Here is a 183-residue protein sequence, read N- to C-terminus: Large ribosomal subunit protein uL6 (183 aa).

Belongs to the universal ribosomal protein uL6 family. Part of the 50S ribosomal subunit.

Its function is as follows. This protein binds to the 23S rRNA, and is important in its secondary structure. It is located near the subunit interface in the base of the L7/L12 stalk, and near the tRNA binding site of the peptidyltransferase center. The sequence is that of Large ribosomal subunit protein uL6 from Parabacteroides distasonis (strain ATCC 8503 / DSM 20701 / CIP 104284 / JCM 5825 / NCTC 11152).